The following is a 158-amino-acid chain: Small ribosomal subunit protein uS9 (158 aa).

It belongs to the universal ribosomal protein uS9 family.

The protein is Small ribosomal subunit protein uS9 of Nitrobacter hamburgensis (strain DSM 10229 / NCIMB 13809 / X14).